The sequence spans 202 residues: Ribosomal RNA small subunit methyltransferase G (202 aa).

S-adenosyl-L-methionine is bound by residues glycine 75, phenylalanine 80, 125–126 (VQ), and arginine 139.

Belongs to the methyltransferase superfamily. RNA methyltransferase RsmG family.

It localises to the cytoplasm. Its function is as follows. Specifically methylates the N7 position of a guanine in 16S rRNA. This chain is Ribosomal RNA small subunit methyltransferase G, found in Mesomycoplasma hyopneumoniae (strain 232) (Mycoplasma hyopneumoniae).